A 585-amino-acid chain; its full sequence is Amyloid protein-binding protein 2 (585 aa).

8 TPR repeats span residues 50 to 83 (QGRL…HHCF), 120 to 153 (IQVG…CTLH), 206 to 239 (AALY…ITSG), 288 to 321 (SDTL…RQSV), 333 to 367 (HEDL…ITHI), 429 to 462 (AKHY…KEQL), 471 to 505 (ALSV…GKKL), and 514 to 547 (EYDY…NRLR).

Component of a CRL2 E3 ubiquitin-protein ligase complex, also named ECS (Elongin BC-CUL2/5-SOCS-box protein) complex, composed of CUL2, Elongin BC (ELOB and ELOC), RBX1 and substrate-specific adapter APPBP2. Interacts with APP; APP interaction inhibits the E3 ubiquitin-protein ligase activity of the CRL2(APPBP2) complex. Post-translationally, rapidly degraded by the proteasome upon overexpression of a C-terminal fragment of APP.

Its subcellular location is the nucleus. It is found in the cytoplasm. The protein localises to the cytoskeleton. It localises to the membrane. The protein operates within protein modification; protein ubiquitination. Its activity is regulated as follows. E3 ubiquitin-protein ligase activity of the CRL2(APPBP2) complex is inhibited by APP. Functionally, substrate-recognition component of a Cul2-RING (CRL2) E3 ubiquitin-protein ligase complex of the DesCEND (destruction via C-end degrons) pathway, which recognizes a C-degron located at the extreme C terminus of target proteins, leading to their ubiquitination and degradation. The C-degron recognized by the DesCEND pathway is usually a motif of less than ten residues and can be present in full-length proteins, truncated proteins or proteolytically cleaved forms. The CRL2(APPBP2) complex specifically recognizes proteins with a -Arg-Xaa-Xaa-Gly degron at the C-terminus, leading to their ubiquitination and degradation. The CRL2(APPBP2) complex mediates ubiquitination and degradation of truncated SELENOV selenoproteins produced by failed UGA/Sec decoding, which end with a -Arg-Xaa-Xaa-Gly degron. May play a role in intracellular protein transport: may be involved in the translocation of APP along microtubules toward the cell surface. The chain is Amyloid protein-binding protein 2 from Rattus norvegicus (Rat).